The sequence spans 111 residues: uncharacterized protein (111 aa).

Residues alanine 12–aspartate 34 are disordered. The required for interaction with PPP3CA stretch occupies residues proline 71–threonine 76. Phosphothreonine occurs at positions 79 and 81.

As to quaternary structure, interacts (via PxIxIT motif, when phosphorylated on Thr-79) with PPP3CA.

This is an uncharacterized protein from Mus musculus (Mouse).